The chain runs to 163 residues: Phosphopantetheine adenylyltransferase (163 aa).

S8 is a binding site for substrate. Residues 8–9 (SF) and H16 each bind ATP. 3 residues coordinate substrate: K40, T72, and R86. ATP is bound by residues 87–89 (GLR), E97, and 122–128 (HSFLSSS).

The protein belongs to the bacterial CoaD family. As to quaternary structure, homohexamer. It depends on Mg(2+) as a cofactor.

The protein localises to the cytoplasm. It carries out the reaction (R)-4'-phosphopantetheine + ATP + H(+) = 3'-dephospho-CoA + diphosphate. It participates in cofactor biosynthesis; coenzyme A biosynthesis; CoA from (R)-pantothenate: step 4/5. Functionally, reversibly transfers an adenylyl group from ATP to 4'-phosphopantetheine, yielding dephospho-CoA (dPCoA) and pyrophosphate. The polypeptide is Phosphopantetheine adenylyltransferase (Parasynechococcus marenigrum (strain WH8102)).